The chain runs to 338 residues: DNA-directed RNA polymerase subunit alpha (338 aa).

Residues 1-234 form an alpha N-terminal domain (alpha-NTD) region; that stretch reads MIHKNWAELI…DQLSIFVNFD (234 aa). Residues 250–338 form an alpha C-terminal domain (alpha-CTD) region; the sequence is FNPLLLKKVD…DLAKKFEDAF (89 aa).

This sequence belongs to the RNA polymerase alpha chain family. In terms of assembly, homodimer. The RNAP catalytic core consists of 2 alpha, 1 beta, 1 beta' and 1 omega subunit. When a sigma factor is associated with the core the holoenzyme is formed, which can initiate transcription.

The enzyme catalyses RNA(n) + a ribonucleoside 5'-triphosphate = RNA(n+1) + diphosphate. DNA-dependent RNA polymerase catalyzes the transcription of DNA into RNA using the four ribonucleoside triphosphates as substrates. The chain is DNA-directed RNA polymerase subunit alpha from Ruegeria pomeroyi (strain ATCC 700808 / DSM 15171 / DSS-3) (Silicibacter pomeroyi).